The chain runs to 362 residues: Peptide chain release factor 1 (362 aa).

Gln-240 is modified (N5-methylglutamine).

It belongs to the prokaryotic/mitochondrial release factor family. Methylated by PrmC. Methylation increases the termination efficiency of RF1.

Its subcellular location is the cytoplasm. Functionally, peptide chain release factor 1 directs the termination of translation in response to the peptide chain termination codons UAG and UAA. The chain is Peptide chain release factor 1 from Bifidobacterium longum subsp. infantis (strain ATCC 15697 / DSM 20088 / JCM 1222 / NCTC 11817 / S12).